Reading from the N-terminus, the 556-residue chain is MNRRLDNARTIRAPHGSDLSARSWLTEAPLRMLMNNLDPDVAERPEELVVYGGIGRAARDWESFDRILGALRDLGPEETLLVQSGKPVGVFRTHADAPRVLIANSNLVPNWANWQHFHELDRKGLMMYGQMTAGSWIYIGSQGIVQGTYETFVEAGRQHYGGDLAGRWILTGGLGGMGGAQPLAATMAGASMIAVECTPSRIEMRLRTRYLDRRADTLDEALAMLEAAKRDGKPVSIGLLGNAAEVFPELVRRGIRPDIVTDQTSAHDPVNGYLPAGWTLEHWAAMRERDPEAVALAAKRSMAGQVRAMLDFWRMGIPVLDYGNNIRAMAQEMGVADAFDFPGFVPAYIRPLFCRGIGPFRWAALSGDPEDIYRTDAKVKELIPDDPHLHHWLDMAREWIAFQGLPARICWVGLGQRHRLGLAFNEMVARGELSAPVVIGRDHLDSGSVASPNRETEAMRDGSDAVSDWPLLNALLNCASGATWVSLHHGGGVGMGYSQHAGMVIVADGTEAAAKRLERVLWNDPATGVMRHADAGYDIAIDCARENGLNLPGITG.

Residues 52-53, Gln-130, 176-178, Glu-196, Arg-201, 242-243, 263-267, 273-274, and Tyr-322 each bind NAD(+); these read GG, GMG, NA, QTSAH, and YL. The active site involves Cys-410. Gly-492 provides a ligand contact to NAD(+).

This sequence belongs to the urocanase family. The cofactor is NAD(+).

The protein localises to the cytoplasm. The enzyme catalyses 4-imidazolone-5-propanoate = trans-urocanate + H2O. It participates in amino-acid degradation; L-histidine degradation into L-glutamate; N-formimidoyl-L-glutamate from L-histidine: step 2/3. Functionally, catalyzes the conversion of urocanate to 4-imidazolone-5-propionate. This chain is Urocanate hydratase, found in Acidiphilium cryptum (strain JF-5).